A 2531-amino-acid polypeptide reads, in one-letter code: Mediator of RNA polymerase II transcription subunit 12 (2531 aa).

Disordered regions lie at residues 1–41 (MLSM…VKHG), 204–283 (QNHD…GSVM), 584–604 (VSRR…PKQD), and 742–762 (TTAT…THGF). The span at 210-247 (SSNGTTSGSLTAAGNGPASNGSTGTSSINSVTGSSAST) shows a compositional bias: low complexity. Positions 586-604 (RRREEDQVEPRPPYEPKQD) are enriched in basic and acidic residues. A Phosphothreonine modification is found at Thr-745. Phosphoserine is present on residues Ser-748 and Ser-781. Over residues 748-757 (SPPPPAPPPT) the composition is skewed to pro residues. The segment covering 796–805 (EKGQQHEAPD) has biased composition (basic and acidic residues). A disordered region spans residues 796–824 (EKGQQHEAPDSPKIGPPGDGETNPGGSIS). 2 positions are modified to phosphoserine: Ser-806 and Ser-1356. At Thr-1360 the chain carries Phosphothreonine. Polar residues-rich tracts occupy residues 1585–1595 (VSKSDCNSSGS) and 1901–1910 (TPSSVDQSPS). Disordered regions lie at residues 1585 to 1608 (VSKS…CHSS), 1898 to 2092 (KADT…NQYA), 2114 to 2218 (QALS…GMAP), and 2469 to 2508 (MGGG…QQQT). Over residues 1919 to 1933 (GRGKGTTTRKRKPKN) the composition is skewed to basic residues. Low complexity-rich tracts occupy residues 1938 to 2038 (PVVN…QQLN) and 2045 to 2055 (QPNPQMNFMQQ). The segment covering 2056–2066 (GPGGGGAGPQG) has biased composition (gly residues). 3 stretches are compositionally biased toward low complexity: residues 2067 to 2080 (MPGQ…APQQ), 2121 to 2132 (RQRQPFQQQAQQ), and 2139 to 2205 (NPMQ…QQQQ). A compositionally biased stretch (gly residues) spans 2469–2496 (MGGGAGGGMGAGPQQGGGAVGGGAGGGM). Low complexity predominate over residues 2497-2507 (VPQQQSMNQQQ).

The protein belongs to the Mediator complex subunit 12 family. Component of the Cdk8 module of the Mediator complex, composed of CycC, Cdk8, kto and skd.

The protein resides in the nucleus. In terms of biological role, component of the Mediator complex, a coactivator involved in regulated gene transcription of nearly all RNA polymerase II-dependent genes. Mediator functions as a bridge to convey information from gene-specific regulatory proteins to the basal RNA polymerase II transcription machinery. Mediator is recruited to promoters by direct interactions with regulatory proteins and serves as a scaffold for the assembly of a functional preinitiation complex with RNA polymerase II and the general transcription factors. Required for leg and eye development and macrochaete specification or differentiation. The protein is Mediator of RNA polymerase II transcription subunit 12 (kto) of Drosophila melanogaster (Fruit fly).